A 251-amino-acid chain; its full sequence is HTH-type transcriptional regulator UlaR (251 aa).

One can recognise an HTH deoR-type domain in the interval 3–58; that stretch reads EAQRHQILLEMLAQLGFVTVEKVVERLGISPATARRDINKLGESGKLKKVRNGAEA. Positions 20 to 39 form a DNA-binding region, H-T-H motif; it reads VTVEKVVERLGISPATARRD.

It localises to the cytoplasm. Represses ulaG and the ulaABCDEF operon. This chain is HTH-type transcriptional regulator UlaR, found in Shigella flexneri.